The chain runs to 339 residues: Holliday junction branch migration complex subunit RuvB (339 aa).

The disordered stretch occupies residues 1-22 (MIDADPTLRPEPLPEDNDRALR). The segment at 1 to 182 (MIDADPTLRP…FGIPTRLQFY (182 aa)) is large ATPase domain (RuvB-L). Residues L21, R22, G63, K66, T67, T68, 129-131 (EDF), R172, Y182, and R219 contribute to the ATP site. T67 is a Mg(2+) binding site. Residues 183–253 (TIDELFEIVS…LADGALTRLG (71 aa)) are small ATPAse domain (RuvB-S). Positions 256–339 (QLGLDGADRR…PPKSQSDLFG (84 aa)) are head domain (RuvB-H). Residues R292, R311, and R316 each coordinate DNA.

Belongs to the RuvB family. Homohexamer. Forms an RuvA(8)-RuvB(12)-Holliday junction (HJ) complex. HJ DNA is sandwiched between 2 RuvA tetramers; dsDNA enters through RuvA and exits via RuvB. An RuvB hexamer assembles on each DNA strand where it exits the tetramer. Each RuvB hexamer is contacted by two RuvA subunits (via domain III) on 2 adjacent RuvB subunits; this complex drives branch migration. In the full resolvosome a probable DNA-RuvA(4)-RuvB(12)-RuvC(2) complex forms which resolves the HJ.

It localises to the cytoplasm. It carries out the reaction ATP + H2O = ADP + phosphate + H(+). The RuvA-RuvB-RuvC complex processes Holliday junction (HJ) DNA during genetic recombination and DNA repair, while the RuvA-RuvB complex plays an important role in the rescue of blocked DNA replication forks via replication fork reversal (RFR). RuvA specifically binds to HJ cruciform DNA, conferring on it an open structure. The RuvB hexamer acts as an ATP-dependent pump, pulling dsDNA into and through the RuvAB complex. RuvB forms 2 homohexamers on either side of HJ DNA bound by 1 or 2 RuvA tetramers; 4 subunits per hexamer contact DNA at a time. Coordinated motions by a converter formed by DNA-disengaged RuvB subunits stimulates ATP hydrolysis and nucleotide exchange. Immobilization of the converter enables RuvB to convert the ATP-contained energy into a lever motion, pulling 2 nucleotides of DNA out of the RuvA tetramer per ATP hydrolyzed, thus driving DNA branch migration. The RuvB motors rotate together with the DNA substrate, which together with the progressing nucleotide cycle form the mechanistic basis for DNA recombination by continuous HJ branch migration. Branch migration allows RuvC to scan DNA until it finds its consensus sequence, where it cleaves and resolves cruciform DNA. This chain is Holliday junction branch migration complex subunit RuvB, found in Ruegeria sp. (strain TM1040) (Silicibacter sp.).